The following is a 577-amino-acid chain: Cell adhesion molecule CEACAM20 (577 aa).

The first 30 residues, M1–A30, serve as a signal peptide directing secretion. The Extracellular segment spans residues H31–A430. Ig-like C2-type domains follow at residues P48–T137, P142–S223, P239–T324, and P329–L415. C72 and C120 are disulfide-bonded. Residues N78 and N102 are each glycosylated (N-linked (GlcNAc...) asparagine). 2 disulfides stabilise this stretch: C259–C307 and C358–C399. Residue N289 is glycosylated (N-linked (GlcNAc...) asparagine). Residues I431–F451 traverse the membrane as a helical segment. Topologically, residues L452–A577 are cytoplasmic. The interval R461–S568 is disordered. The segment covering I474–P484 has biased composition (polar residues). The span at D516 to P526 shows a compositional bias: basic and acidic residues. A compositionally biased stretch (pro residues) spans K536–P551. Phosphotyrosine is present on residues Y559 and Y570.

It belongs to the immunoglobulin superfamily. CEA family. In terms of assembly, interacts (via extracellular domain) with PTPRH (via extracellular domain); the interaction dephosphorylates CEACAM20. Interacts (phosphorylated form) with SYK (via SH2 domains); the interaction further enhances CEACAM20 phosphorylation. Phosphorylated on tyrosine residues by SYK, SRC and FYN in vitro. Strongly expressed in the small intestine and colon (at protein level). Minimal expression in other tissues (at protein level). Highly expressed in cecum, colon, ileum, jejunum, and testis, and also detected at lower levels in salivary gland and thymus.

Its subcellular location is the cell projection. It is found in the microvillus membrane. The protein localises to the apical cell membrane. In terms of biological role, together with the tyrosine-protein kinase SYK, enhances production of the cytokine CXCL8/IL-8 via the NFKB pathway and may thus have a role in the intestinal immune response. This is Cell adhesion molecule CEACAM20 from Mus musculus (Mouse).